Reading from the N-terminus, the 1019-residue chain is DNA topoisomerase 1 (1019 aa).

The disordered stretch occupies residues 1 to 160 (MNSIQVKNEP…KTMSITGSGE (160 aa)). Residues 46–56 (KPLAKRPKVED) are compositionally biased toward basic and acidic residues. Polar residues predominate over residues 62–78 (PLTSTVSSQNGVQKRSG). Composition is skewed to acidic residues over residues 83–93 (DDNDDDSDSDS) and 107–136 (SDDD…DDDD). Interaction with DNA stretches follow at residues 379 to 380 (KY), 442 to 447 (RAGNEK), and 556 to 558 (SAK). The Topo IB-type catalytic domain occupies 386 to 860 (TSNFKTNSDR…KKVKKEEEEN (475 aa)). The interval 716 to 737 (EQKGLTGDDGTPKKGKKAKNVE) is disordered. Residue Y822 is the O-(3'-phospho-DNA)-tyrosine intermediate of the active site. Disordered stretches follow at residues 843-890 (GQGK…TGDS) and 940-1019 (MRKL…AAVV). The segment covering 854-863 (KKEEEENDIK) has biased composition (basic and acidic residues). The segment covering 864 to 879 (PKKKDAKGAASKKRAA) has biased composition (basic residues). Composition is skewed to basic and acidic residues over residues 940-950 (MRKLDSAERKG) and 980-996 (TSAD…VDKT). Positions 997 to 1012 (EESDDDLSSDSSDDED) are enriched in acidic residues.

Belongs to the type IB topoisomerase family. As to quaternary structure, monomer.

The catalysed reaction is ATP-independent breakage of single-stranded DNA, followed by passage and rejoining.. Its function is as follows. Releases the supercoiling and torsional tension of DNA introduced during the DNA replication and transcription by transiently cleaving and rejoining one strand of the DNA duplex. Introduces a single-strand break via transesterification at a target site in duplex DNA. The scissile phosphodiester is attacked by the catalytic tyrosine of the enzyme, resulting in the formation of a DNA-(3'-phosphotyrosyl)-enzyme intermediate and the expulsion of a 5'-OH DNA strand. The free DNA strand then rotates around the intact phosphodiester bond on the opposing strand, thus removing DNA supercoils. Finally, in the religation step, the DNA 5'-OH attacks the covalent intermediate to expel the active-site tyrosine and restore the DNA phosphodiester backbone. The protein is DNA topoisomerase 1 (TOP1) of Mycosarcoma maydis (Corn smut fungus).